A 251-amino-acid polypeptide reads, in one-letter code: uncharacterized protein (251 aa).

Positions 1-25 are cleaved as a signal peptide; it reads MSAGRLNKKSLGIVMLLSVGLLLAG. C26 carries the N-palmitoyl cysteine lipid modification. A lipid anchor (S-diacylglycerol cysteine) is attached at C26. The LysM domain occupies 40–84; sequence SVYTVKRGDTLYRISRTTGTSVKELARLNGISPPYTIEVGQKLKL. The span at 93–112 shows a compositional bias: low complexity; that stretch reads TRKSTAKSTTKTASVTPSSA. The tract at residues 93–115 is disordered; it reads TRKSTAKSTTKTASVTPSSAVPK.

Belongs to the peptidase M23B family.

Its subcellular location is the cell inner membrane. This is an uncharacterized protein from Escherichia coli (strain K12).